The following is a 65-amino-acid chain: MPKMKTHRGAAKRFKKTGTGKLKRAHAFTSHILTKKSAKRKRNLRKTGYVSTAQEKAMKKLLPYL.

Residues 1–23 are disordered; it reads MPKMKTHRGAAKRFKKTGTGKLK.

Belongs to the bacterial ribosomal protein bL35 family.

The chain is Large ribosomal subunit protein bL35 from Clostridium perfringens (strain ATCC 13124 / DSM 756 / JCM 1290 / NCIMB 6125 / NCTC 8237 / Type A).